The following is a 652-amino-acid chain: Probable L-type lectin-domain containing receptor kinase S.5 (652 aa).

An N-terminal signal peptide occupies residues 1–20; it reads MRFSLAWKLLFLILTCKIET. Over 21–266 the chain is Extracellular; that stretch reads QVKCLKFDFP…EGLKIDGDGN (246 aa). Positions 24–257 are legume-lectin like; it reads CLKFDFPGFN…LNCVRSWSFE (234 aa). 8 N-linked (GlcNAc...) asparagine glycosylation sites follow: asparagine 33, asparagine 91, asparagine 97, asparagine 100, asparagine 122, asparagine 139, asparagine 201, and asparagine 244. The chain crosses the membrane as a helical span at residues 267-287; the sequence is MLWLWITIPIVFIVGIGAFLG. Residues 288–652 are Cytoplasmic-facing; sequence ALYLRSRSKA…INSLTELTGR (365 aa). Residues 330-622 form the Protein kinase domain; that stretch reads FGAENKLGQG…PDVPTERPAF (293 aa). ATP is bound by residues 336–344 and lysine 357; that span reads LGQGGFGMV. The active-site Proton acceptor is the aspartate 455.

This sequence in the C-terminal section; belongs to the protein kinase superfamily. Ser/Thr protein kinase family. The protein in the N-terminal section; belongs to the leguminous lectin family.

Its subcellular location is the cell membrane. It carries out the reaction L-seryl-[protein] + ATP = O-phospho-L-seryl-[protein] + ADP + H(+). The enzyme catalyses L-threonyl-[protein] + ATP = O-phospho-L-threonyl-[protein] + ADP + H(+). The sequence is that of Probable L-type lectin-domain containing receptor kinase S.5 (LECRKS5) from Arabidopsis thaliana (Mouse-ear cress).